The primary structure comprises 265 residues: MDILHAVFLALIQGITEFLPISSSAHLILPKELFGWEDQGLAFDVAVHVGTLSAVILYFRKDIVNLIAGWFGSITGKQSENGSLAWCIIVATVPAGLFGLLLGNFIEEHLRSVSVIATTTVVFGLLLWFADAKHSETKQLAQMTLFIALVIGLAQALAMIPGTSRSGITITAALLLGFGRSDAARFSFLLSIPIITLSGGYMGLKLLEESNVNWQEIGVGVLVSAISAYICIHYFLSFINKIGMLPFVIYRLLLGAGLFALVWFA.

8 consecutive transmembrane segments (helical) span residues 1 to 21 (MDIL…FLPI), 39 to 59 (QGLA…ILYF), 86 to 106 (WCII…GNFI), 112 to 132 (SVSV…FADA), 140 to 160 (LAQM…LAMI), 186 to 206 (FSFL…GLKL), 219 to 239 (VGVL…LSFI), and 244 to 264 (MLPF…LVWF).

Belongs to the UppP family.

Its subcellular location is the cell inner membrane. It catalyses the reaction di-trans,octa-cis-undecaprenyl diphosphate + H2O = di-trans,octa-cis-undecaprenyl phosphate + phosphate + H(+). Functionally, catalyzes the dephosphorylation of undecaprenyl diphosphate (UPP). Confers resistance to bacitracin. The sequence is that of Undecaprenyl-diphosphatase from Saccharophagus degradans (strain 2-40 / ATCC 43961 / DSM 17024).